The chain runs to 191 residues: Thymidylate kinase (191 aa).

7-14 (GVDGAGKS) provides a ligand contact to ATP.

The protein belongs to the thymidylate kinase family.

It catalyses the reaction dTMP + ATP = dTDP + ADP. Phosphorylation of dTMP to form dTDP in both de novo and salvage pathways of dTTP synthesis. The chain is Thymidylate kinase from Helicobacter pylori (strain Shi470).